A 116-amino-acid polypeptide reads, in one-letter code: Large ribosomal subunit protein bL19 (116 aa).

This sequence belongs to the bacterial ribosomal protein bL19 family.

This protein is located at the 30S-50S ribosomal subunit interface and may play a role in the structure and function of the aminoacyl-tRNA binding site. This Lactobacillus gasseri (strain ATCC 33323 / DSM 20243 / BCRC 14619 / CIP 102991 / JCM 1131 / KCTC 3163 / NCIMB 11718 / NCTC 13722 / AM63) protein is Large ribosomal subunit protein bL19.